A 528-amino-acid chain; its full sequence is D-3-phosphoglycerate dehydrogenase (528 aa).

NAD(+)-binding positions include 151-152 (RI), Asp171, 230-232 (AAR), and Asp256. Arg232 is an active-site residue. Glu261 is an active-site residue. The active-site Proton donor is His279. 279–282 (HLGA) contributes to the NAD(+) binding site. The ACT domain occupies 455 to 527 (NLIIHYVDRP…DAYKLEVVDL (73 aa)).

The protein belongs to the D-isomer specific 2-hydroxyacid dehydrogenase family.

It carries out the reaction (2R)-3-phosphoglycerate + NAD(+) = 3-phosphooxypyruvate + NADH + H(+). The catalysed reaction is (R)-2-hydroxyglutarate + NAD(+) = 2-oxoglutarate + NADH + H(+). It participates in amino-acid biosynthesis; L-serine biosynthesis; L-serine from 3-phospho-D-glycerate: step 1/3. Functionally, catalyzes the reversible oxidation of 3-phospho-D-glycerate to 3-phosphonooxypyruvate, the first step of the phosphorylated L-serine biosynthesis pathway. Also catalyzes the reversible oxidation of 2-hydroxyglutarate to 2-oxoglutarate. This is D-3-phosphoglycerate dehydrogenase (serA) from Mycobacterium bovis (strain ATCC BAA-935 / AF2122/97).